The chain runs to 304 residues: MQQTTIQRSITFSGIGVHSGQCLNVTLHPASENTGIVFEVITGDTRHTLIPSPSAVIATKLATTIGNKNITISTVEHLLASIRGLEIDNIRICVEGAEIPIMDGSAKIFTNELLQAGIKYLPATKKILQVIKPVEFIKGEKRIRALPYNGFKLDYTINYIHPIIGHQRLVLDVTPTTFLSIANARTYGFLKDVEQMLKNGLAQGGSLENAIVLDSTKVINPEGLRYPDEFVRHKALDFIGDMAMMHLPLQGYFEIYCSGHQHNNQFLHKLQDENALALVTLEGEKTQNLYQNITPLYNDVLALL.

Zn(2+) contacts are provided by His77, His233, and Asp237. His260 (proton donor) is an active-site residue.

Belongs to the LpxC family. The cofactor is Zn(2+).

It carries out the reaction a UDP-3-O-[(3R)-3-hydroxyacyl]-N-acetyl-alpha-D-glucosamine + H2O = a UDP-3-O-[(3R)-3-hydroxyacyl]-alpha-D-glucosamine + acetate. It participates in glycolipid biosynthesis; lipid IV(A) biosynthesis; lipid IV(A) from (3R)-3-hydroxytetradecanoyl-[acyl-carrier-protein] and UDP-N-acetyl-alpha-D-glucosamine: step 2/6. Its function is as follows. Catalyzes the hydrolysis of UDP-3-O-myristoyl-N-acetylglucosamine to form UDP-3-O-myristoylglucosamine and acetate, the committed step in lipid A biosynthesis. This is UDP-3-O-acyl-N-acetylglucosamine deacetylase from Lawsonia intracellularis (strain PHE/MN1-00).